We begin with the raw amino-acid sequence, 112 residues long: Protein ORF1 (112 aa).

Low complexity predominate over residues 1-10 (MEGTDWSGWG). Positions 1-20 (MEGTDWSGWGDDSDFPWPKG) are disordered. The helical transmembrane segment at 51–71 (IAFVILIVSLFVLLLGVLLAC) threads the bilayer.

Its subcellular location is the host membrane. The polypeptide is Protein ORF1 (Snake adenovirus serotype 1 (SnAdV-1)).